A 664-amino-acid chain; its full sequence is Methionine--tRNA ligase (664 aa).

Positions 15-25 (YYPSGKAHIGH) match the 'HIGH' region motif. Positions 310-314 (KMSKS) match the 'KMSKS' region motif. Lys-313 is an ATP binding site. The tRNA-binding domain maps to 563–664 (DFDKIDLRVA…SALPNGAKVK (102 aa)).

It belongs to the class-I aminoacyl-tRNA synthetase family. MetG type 2B subfamily. Homodimer.

It localises to the cytoplasm. It carries out the reaction tRNA(Met) + L-methionine + ATP = L-methionyl-tRNA(Met) + AMP + diphosphate. Is required not only for elongation of protein synthesis but also for the initiation of all mRNA translation through initiator tRNA(fMet) aminoacylation. This chain is Methionine--tRNA ligase (metG), found in Listeria monocytogenes serovar 1/2a (strain ATCC BAA-679 / EGD-e).